Reading from the N-terminus, the 599-residue chain is Beta-(1--&gt;2)glucan export ATP-binding/permease protein NdvA (599 aa).

The 281-residue stretch at 21 to 301 (TITMCVASVL…ISAFINQTVT (281 aa)) folds into the ABC transmembrane type-1 domain. 5 helical membrane passes run 22-42 (ITMC…PVLF), 55-75 (IFSP…AAVF), 156-176 (MRMS…GQLV), 248-268 (MAST…VTKG), and 276-296 (IAFI…SAFI). The 235-residue stretch at 335–569 (IVFDNVTFEF…GGRFSDLLRA (235 aa)) folds into the ABC transporter domain. 368–375 (GPTGAGKT) is a binding site for ATP.

Belongs to the ABC transporter superfamily. Beta-(1--&gt;2)glucan exporter (TC 3.A.1.108.1) family. In terms of assembly, homodimer.

Its subcellular location is the cell inner membrane. It carries out the reaction [(1-&gt;2)-beta-D-glucosyl](n)(in) + ATP + H2O = [(1-&gt;2)-beta-D-glucosyl](n)(out) + ADP + phosphate + H(+). In terms of biological role, involved in beta-(1--&gt;2)glucan export. Transmembrane domains (TMD) form a pore in the inner membrane and the ATP-binding domain (NBD) is responsible for energy generation. The chain is Beta-(1--&gt;2)glucan export ATP-binding/permease protein NdvA from Brucella suis biovar 1 (strain 1330).